An 80-amino-acid polypeptide reads, in one-letter code: Peroxidase (80 aa).

Residues 56 to 80 (DANEAEANSDLPGFNSSRSELEAAF) are disordered. P67 is a binding site for substrate. The N-linked (GlcNAc...) asparagine glycan is linked to N70.

It belongs to the peroxidase family. Classical plant (class III) peroxidase subfamily. Requires Ca(2+) as cofactor. The cofactor is heme b.

It carries out the reaction 2 a phenolic donor + H2O2 = 2 a phenolic radical donor + 2 H2O. Functionally, removal of H(2)O(2), oxidation of toxic reductants, biosynthesis and degradation of lignin, suberization, auxin catabolism, response to environmental stresses such as wounding, pathogen attack and oxidative stress. These functions might be dependent on each isozyme/isoform in each plant tissue. In Triticum aestivum (Wheat), this protein is Peroxidase.